A 270-amino-acid polypeptide reads, in one-letter code: Oxidoreductase NAD-binding domain-containing protein 1 (270 aa).

An FAD-binding FR-type domain is found at 20–123; the sequence is MELFSARVCD…VGGNFYFDPQ (104 aa). An NAD(+)-binding site is contributed by 137-142; that stretch reads GVGINP.

In Danio rerio (Zebrafish), this protein is Oxidoreductase NAD-binding domain-containing protein 1 (oxnad1).